Reading from the N-terminus, the 205-residue chain is Cryptic plasmid protein C (205 aa).

The interval 142–205 (THGYSDPDDP…RAGNAGKGRF (64 aa)) is disordered. The span at 155–174 (QSMTQAKDLPRNTQEAAQSI) shows a compositional bias: polar residues. Over residues 189–205 (QAKKPRRRAGNAGKGRF) the composition is skewed to basic residues.

The protein is Cryptic plasmid protein C (cppC) of Neisseria gonorrhoeae.